A 358-amino-acid chain; its full sequence is UDP-N-acetylglucosamine--N-acetylmuramyl-(pentapeptide) pyrophosphoryl-undecaprenol N-acetylglucosamine transferase (358 aa).

UDP-N-acetyl-alpha-D-glucosamine contacts are provided by residues 12–14 (TGG), Asn-124, Arg-162, Ser-185, Ile-242, 261–266 (ALTVSE), and Gln-287.

The protein belongs to the glycosyltransferase 28 family. MurG subfamily.

Its subcellular location is the cell inner membrane. It catalyses the reaction di-trans,octa-cis-undecaprenyl diphospho-N-acetyl-alpha-D-muramoyl-L-alanyl-D-glutamyl-meso-2,6-diaminopimeloyl-D-alanyl-D-alanine + UDP-N-acetyl-alpha-D-glucosamine = di-trans,octa-cis-undecaprenyl diphospho-[N-acetyl-alpha-D-glucosaminyl-(1-&gt;4)]-N-acetyl-alpha-D-muramoyl-L-alanyl-D-glutamyl-meso-2,6-diaminopimeloyl-D-alanyl-D-alanine + UDP + H(+). It functions in the pathway cell wall biogenesis; peptidoglycan biosynthesis. Functionally, cell wall formation. Catalyzes the transfer of a GlcNAc subunit on undecaprenyl-pyrophosphoryl-MurNAc-pentapeptide (lipid intermediate I) to form undecaprenyl-pyrophosphoryl-MurNAc-(pentapeptide)GlcNAc (lipid intermediate II). The chain is UDP-N-acetylglucosamine--N-acetylmuramyl-(pentapeptide) pyrophosphoryl-undecaprenol N-acetylglucosamine transferase from Pseudoalteromonas translucida (strain TAC 125).